A 169-amino-acid polypeptide reads, in one-letter code: ATP synthase subunit b (169 aa).

Residues 14 to 34 (TFLAMLISFLILVFILQQVAF) traverse the membrane as a helical segment.

The protein belongs to the ATPase B chain family. In terms of assembly, F-type ATPases have 2 components, F(1) - the catalytic core - and F(0) - the membrane proton channel. F(1) has five subunits: alpha(3), beta(3), gamma(1), delta(1), epsilon(1). F(0) has four main subunits: a(1), b(2) and c(10-14). The alpha and beta chains form an alternating ring which encloses part of the gamma chain. F(1) is attached to F(0) by a central stalk formed by the gamma and epsilon chains, while a peripheral stalk is formed by the delta and b chains.

Its subcellular location is the cell membrane. Functionally, f(1)F(0) ATP synthase produces ATP from ADP in the presence of a proton or sodium gradient. F-type ATPases consist of two structural domains, F(1) containing the extramembraneous catalytic core and F(0) containing the membrane proton channel, linked together by a central stalk and a peripheral stalk. During catalysis, ATP synthesis in the catalytic domain of F(1) is coupled via a rotary mechanism of the central stalk subunits to proton translocation. In terms of biological role, component of the F(0) channel, it forms part of the peripheral stalk, linking F(1) to F(0). The protein is ATP synthase subunit b of Heliobacterium modesticaldum (strain ATCC 51547 / Ice1).